Reading from the N-terminus, the 200-residue chain is N-(5'-phosphoribosyl)anthranilate isomerase (200 aa).

It belongs to the TrpF family.

The enzyme catalyses N-(5-phospho-beta-D-ribosyl)anthranilate = 1-(2-carboxyphenylamino)-1-deoxy-D-ribulose 5-phosphate. It participates in amino-acid biosynthesis; L-tryptophan biosynthesis; L-tryptophan from chorismate: step 3/5. This Endomicrobium trichonymphae protein is N-(5'-phosphoribosyl)anthranilate isomerase.